The chain runs to 544 residues: Exodeoxyribonuclease 7 large subunit (544 aa).

The segment at 522–544 (PETPPKSRKADNPPEPPEQTSFL) is disordered.

The protein belongs to the XseA family. As to quaternary structure, heterooligomer composed of large and small subunits.

The protein localises to the cytoplasm. It catalyses the reaction Exonucleolytic cleavage in either 5'- to 3'- or 3'- to 5'-direction to yield nucleoside 5'-phosphates.. In terms of biological role, bidirectionally degrades single-stranded DNA into large acid-insoluble oligonucleotides, which are then degraded further into small acid-soluble oligonucleotides. The sequence is that of Exodeoxyribonuclease 7 large subunit from Zymomonas mobilis subsp. mobilis (strain ATCC 31821 / ZM4 / CP4).